The following is a 425-amino-acid chain: UDP-N-acetylglucosamine 1-carboxyvinyltransferase (425 aa).

25-26 lines the phosphoenolpyruvate pocket; that stretch reads KN. Arg95 contacts UDP-N-acetyl-alpha-D-glucosamine. Cys119 (proton donor) is an active-site residue. Cys119 bears the 2-(S-cysteinyl)pyruvic acid O-phosphothioketal mark. UDP-N-acetyl-alpha-D-glucosamine is bound by residues 124–128, Asp306, and Ile328; that span reads RPVDQ.

It belongs to the EPSP synthase family. MurA subfamily.

It localises to the cytoplasm. It carries out the reaction phosphoenolpyruvate + UDP-N-acetyl-alpha-D-glucosamine = UDP-N-acetyl-3-O-(1-carboxyvinyl)-alpha-D-glucosamine + phosphate. The protein operates within cell wall biogenesis; peptidoglycan biosynthesis. Cell wall formation. Adds enolpyruvyl to UDP-N-acetylglucosamine. The polypeptide is UDP-N-acetylglucosamine 1-carboxyvinyltransferase (Thermus thermophilus (strain ATCC BAA-163 / DSM 7039 / HB27)).